Here is a 117-residue protein sequence, read N- to C-terminus: UPF0122 protein Teth514_1714 (117 aa).

This sequence belongs to the UPF0122 family.

Its function is as follows. Might take part in the signal recognition particle (SRP) pathway. This is inferred from the conservation of its genetic proximity to ftsY/ffh. May be a regulatory protein. The polypeptide is UPF0122 protein Teth514_1714 (Thermoanaerobacter sp. (strain X514)).